We begin with the raw amino-acid sequence, 173 residues long: Ferric citrate uptake sigma factor FecI (173 aa).

The Polymerase core binding motif lies at 40-52 (DIAQDTFLRVMVS). The segment at residues 139-158 (YSEIAHKLGVSISSVKKYVA) is a DNA-binding region (H-T-H motif).

The protein belongs to the sigma-70 factor family. ECF subfamily. As to quaternary structure, interacts with FecR (via cytoplasmic N-terminus).

Sigma factors are initiation factors that promote the attachment of RNA polymerase to specific initiation sites and are then released. This sigma factor regulates transcriptional activation of the fecABCDE operon which mediates ferric citrate transport. The protein is Ferric citrate uptake sigma factor FecI (fecI) of Escherichia coli (strain K12).